Reading from the N-terminus, the 295-residue chain is Acetyl-coenzyme A carboxylase carboxyl transferase subunit beta (295 aa).

The region spanning 25-294 is the CoA carboxyltransferase N-terminal domain; sequence VWTKCTSCEQ…PFNAEELSDT (270 aa). Positions 29, 32, 48, and 51 each coordinate Zn(2+). The C4-type zinc finger occupies 29–51; it reads CTSCEQVLYRDELKRHLEVCPKC.

This sequence belongs to the AccD/PCCB family. Acetyl-CoA carboxylase is a heterohexamer composed of biotin carboxyl carrier protein (AccB), biotin carboxylase (AccC) and two subunits each of ACCase subunit alpha (AccA) and ACCase subunit beta (AccD). Requires Zn(2+) as cofactor.

Its subcellular location is the cytoplasm. It catalyses the reaction N(6)-carboxybiotinyl-L-lysyl-[protein] + acetyl-CoA = N(6)-biotinyl-L-lysyl-[protein] + malonyl-CoA. It participates in lipid metabolism; malonyl-CoA biosynthesis; malonyl-CoA from acetyl-CoA: step 1/1. Functionally, component of the acetyl coenzyme A carboxylase (ACC) complex. Biotin carboxylase (BC) catalyzes the carboxylation of biotin on its carrier protein (BCCP) and then the CO(2) group is transferred by the transcarboxylase to acetyl-CoA to form malonyl-CoA. The chain is Acetyl-coenzyme A carboxylase carboxyl transferase subunit beta from Mannheimia succiniciproducens (strain KCTC 0769BP / MBEL55E).